Reading from the N-terminus, the 890-residue chain is Nitrate reductase [NADH] 2 (890 aa).

C165 lines the Mo-molybdopterin pocket. The region spanning S513–I588 is the Cytochrome b5 heme-binding domain. The heme site is built by H548 and H571. Positions R634 to T746 constitute an FAD-binding FR-type domain. FAD contacts are provided by residues R686–T689, L703–Y707, F708, F715, L720–S722, and T773.

This sequence belongs to the nitrate reductase family. Homodimer. Requires FAD as cofactor. The cofactor is heme. Mo-molybdopterin serves as cofactor.

The enzyme catalyses nitrite + NAD(+) + H2O = nitrate + NADH + H(+). Its function is as follows. Nitrate reductase is a key enzyme involved in the first step of nitrate assimilation in plants, fungi and bacteria. The protein is Nitrate reductase [NADH] 2 (NIA2) of Phaseolus vulgaris (Kidney bean).